The primary structure comprises 448 residues: Cysteine--tRNA ligase (448 aa).

Cysteine 27 serves as a coordination point for Zn(2+). The 'HIGH' region motif lies at 29-39; that stretch reads PTVYNYIHVGN. The Zn(2+) site is built by cysteine 210, histidine 235, and glutamate 239. The 'KMSKS' region signature appears at 267 to 271; the sequence is KMSKS. Position 270 (lysine 270) interacts with ATP.

This sequence belongs to the class-I aminoacyl-tRNA synthetase family. In terms of assembly, monomer. Zn(2+) is required as a cofactor.

It localises to the cytoplasm. The enzyme catalyses tRNA(Cys) + L-cysteine + ATP = L-cysteinyl-tRNA(Cys) + AMP + diphosphate. The chain is Cysteine--tRNA ligase from Lactococcus lactis subsp. cremoris (strain MG1363).